The chain runs to 454 residues: Bifunctional protein GlmU (454 aa).

The tract at residues 1–232 is pyrophosphorylase; that stretch reads MTDRTCLSIV…VDNVIGINNR (232 aa). Residues 11–14, K25, Q78, and 83–84 contribute to the UDP-N-acetyl-alpha-D-glucosamine site; these read LAAG and GT. D108 contacts Mg(2+). 4 residues coordinate UDP-N-acetyl-alpha-D-glucosamine: G144, E158, N173, and N230. N230 serves as a coordination point for Mg(2+). The linker stretch occupies residues 233–253; it reads AELAEAETIWQNRKRRELMLS. The segment at 254 to 454 is N-acetyltransferase; the sequence is GVTLIAPETV…AIKAAKSVSK (201 aa). Residues R319 and K337 each contribute to the UDP-N-acetyl-alpha-D-glucosamine site. H349 (proton acceptor) is an active-site residue. 2 residues coordinate UDP-N-acetyl-alpha-D-glucosamine: Y352 and N363. Acetyl-CoA is bound by residues A366, 372–373, S391, S409, and R426; that span reads NY.

It in the N-terminal section; belongs to the N-acetylglucosamine-1-phosphate uridyltransferase family. In the C-terminal section; belongs to the transferase hexapeptide repeat family. As to quaternary structure, homotrimer. It depends on Mg(2+) as a cofactor.

The protein resides in the cytoplasm. It catalyses the reaction alpha-D-glucosamine 1-phosphate + acetyl-CoA = N-acetyl-alpha-D-glucosamine 1-phosphate + CoA + H(+). It carries out the reaction N-acetyl-alpha-D-glucosamine 1-phosphate + UTP + H(+) = UDP-N-acetyl-alpha-D-glucosamine + diphosphate. It functions in the pathway nucleotide-sugar biosynthesis; UDP-N-acetyl-alpha-D-glucosamine biosynthesis; N-acetyl-alpha-D-glucosamine 1-phosphate from alpha-D-glucosamine 6-phosphate (route II): step 2/2. Its pathway is nucleotide-sugar biosynthesis; UDP-N-acetyl-alpha-D-glucosamine biosynthesis; UDP-N-acetyl-alpha-D-glucosamine from N-acetyl-alpha-D-glucosamine 1-phosphate: step 1/1. The protein operates within bacterial outer membrane biogenesis; LPS lipid A biosynthesis. Catalyzes the last two sequential reactions in the de novo biosynthetic pathway for UDP-N-acetylglucosamine (UDP-GlcNAc). The C-terminal domain catalyzes the transfer of acetyl group from acetyl coenzyme A to glucosamine-1-phosphate (GlcN-1-P) to produce N-acetylglucosamine-1-phosphate (GlcNAc-1-P), which is converted into UDP-GlcNAc by the transfer of uridine 5-monophosphate (from uridine 5-triphosphate), a reaction catalyzed by the N-terminal domain. This chain is Bifunctional protein GlmU, found in Brucella melitensis biotype 1 (strain ATCC 23456 / CCUG 17765 / NCTC 10094 / 16M).